An 88-amino-acid chain; its full sequence is Small ribosomal subunit protein uS17 (88 aa).

It belongs to the universal ribosomal protein uS17 family. Part of the 30S ribosomal subunit.

Its function is as follows. One of the primary rRNA binding proteins, it binds specifically to the 5'-end of 16S ribosomal RNA. The protein is Small ribosomal subunit protein uS17 of Teredinibacter turnerae (strain ATCC 39867 / T7901).